We begin with the raw amino-acid sequence, 976 residues long: Dolichyl-phosphooligosaccharide-protein glycotransferase 1 (976 aa).

Residues 1–21 are Cytoplasmic-facing; it reads MVKSKVKKVEKGKEGEEKRST. Residues 22–42 form a helical membrane-spanning segment; the sequence is YVLLKKVLIPILVFGFAIYAF. At 43–112 the chain is on the extracellular side; sequence YLRHLTAGKY…KVVSLFGYNE (70 aa). A DXD motif 1 motif is present at residues 55–57; sequence DPD. Asp57 contacts Mn(2+). The helical transmembrane segment at 113–133 threads the bilayer; it reads LQAFLLWPPFVGFLGVIAVYL. Residues 134–135 lie on the Cytoplasmic side of the membrane; it reads LG. The chain crosses the membrane as a helical span at residues 136 to 156; the sequence is RKVLNEWTGLWGAVVLTVSTA. At 157 to 165 the chain is on the extracellular side; the sequence is NFSRTFSGN. Residues 166–186 traverse the membrane as a helical segment; it reads ARGDGPFMALFIFASVAMLYY. The Mn(2+) site is built by Arg167 and Asp169. The DXD motif 2 signature appears at 167-169; sequence RGD. Residues 187–193 lie on the Cytoplasmic side of the membrane; the sequence is LKESNKT. Residues 194-214 form a helical membrane-spanning segment; sequence RKIIYGTLFVLLTVISLGAWN. Residue Gly215 is a topological domain, extracellular. A helical transmembrane segment spans residues 216–236; it reads SPFGLMVLLGFASLQTIILFI. Topologically, residues 237–247 are cytoplasmic; sequence FGKLEELKKFV. The helical transmembrane segment at 248–268 threads the bilayer; sequence KEFYPAYLAILAFGYALTFPG. Residue Ile269 is a topological domain, extracellular. Residues 270 to 290 form a helical membrane-spanning segment; sequence VKIGGFIRFAFEVFLGLIFLL. Topologically, residues 291–306 are cytoplasmic; that stretch reads VIMLYGGRYLNYSDKK. Residues 307–327 traverse the membrane as a helical segment; it reads HRFLVVTIIVLLGFGGAYAYV. The Extracellular segment spans residues 328–360; that stretch reads GPKLFRLMGGAYQSTQVYETVQELAKTTIGDVK. The TIXE motif motif lies at 347 to 350; that stretch reads TVQE. The chain crosses the membrane as a helical span at residues 361–381; that stretch reads AYYGVESGNGLIFFLSIPGLL. Residues 382–396 lie on the Cytoplasmic side of the membrane; sequence ILLTKYLYDLFKKAK. Residues 397 to 417 traverse the membrane as a helical segment; it reads SDNETLFALVFYTMSLYLLYL. Ala418 is a topological domain (extracellular). Residues 419–439 form a helical membrane-spanning segment; sequence VRFLFLASYAVALFFGIFIGF. Residue Arg420 coordinates a glycophospholipid. The Cytoplasmic portion of the chain corresponds to 440–453; that stretch reads SMDVIEKMKENIGI. A helical membrane pass occupies residues 454 to 474; sequence KAALGIVLSLMILVIPFVHAP. The Extracellular portion of the chain corresponds to 475–976; the sequence is VLARSARALK…SASAPHHSSE (502 aa). Positions 513 to 515 are interacts with target acceptor peptide in protein substrate; it reads WWD. Positions 513–517 match the WWDYG motif motif; the sequence is WWDYG. Position 518 (Tyr518) interacts with a glycophospholipid. Residues 573-580 carry the DK motif motif; sequence DWAKFNAI.

This sequence belongs to the STT3 family. Mn(2+) is required as a cofactor. Mg(2+) serves as cofactor.

The protein localises to the cell membrane. It catalyses the reaction an archaeal dolichyl phosphooligosaccharide + [protein]-L-asparagine = an archaeal dolichyl phosphate + a glycoprotein with the oligosaccharide chain attached by N-beta-D-glycosyl linkage to a protein L-asparagine.. The protein operates within protein modification; protein glycosylation. In terms of biological role, oligosaccharyl transferase (OST) that catalyzes the initial transfer of a defined glycan (ManNAcXyl(2)GlcAMan(2)GalNAc in Pyrococcus) from the lipid carrier dolichol-monophosphate to an asparagine residue within an Asn-X-Ser/Thr consensus motif in nascent polypeptide chains, the first step in protein N-glycosylation. This is Dolichyl-phosphooligosaccharide-protein glycotransferase 1 (aglB1) from Pyrococcus horikoshii (strain ATCC 700860 / DSM 12428 / JCM 9974 / NBRC 100139 / OT-3).